Consider the following 145-residue polypeptide: MQFNIQDIIKMLPHSYPFLLLDKVTACVPNESATAIKNVTFNEPFFIGHFPNNPVMPGVLIVEAMAQACLVCVMSDSKHNFENYTIYFMSIELAKFRKPVIPGDILTIEVNVIHKRKDTCRFQCFARVDQALASEAQILAMIKKN.

H49 is an active-site residue.

The protein belongs to the thioester dehydratase family. FabZ subfamily.

It localises to the cytoplasm. It catalyses the reaction a (3R)-hydroxyacyl-[ACP] = a (2E)-enoyl-[ACP] + H2O. In terms of biological role, involved in unsaturated fatty acids biosynthesis. Catalyzes the dehydration of short chain beta-hydroxyacyl-ACPs and long chain saturated and unsaturated beta-hydroxyacyl-ACPs. The polypeptide is 3-hydroxyacyl-[acyl-carrier-protein] dehydratase FabZ (Ehrlichia ruminantium (strain Gardel)).